The following is a 440-amino-acid chain: Adenylyltransferase and sulfurtransferase UBA4 (440 aa).

Met-1 carries the post-translational modification N-acetylmethionine. Residues Gly-77, Asp-98, 105 to 109, Lys-122, and 166 to 167 contribute to the ATP site; these read SNLHR and DS. Residues Cys-208 and Cys-211 each coordinate Zn(2+). The active-site Glycyl thioester intermediate; for adenylyltransferase activity is Cys-225. Residues Cys-286 and Cys-289 each coordinate Zn(2+). Ser-326 is subject to Phosphoserine. The Rhodanese domain maps to 339–438; that stretch reads FLAKHIFLDV…YIDDIDQTIP (100 aa). Residue Cys-397 is the Cysteine persulfide intermediate; for sulfurtransferase activity of the active site.

The protein in the N-terminal section; belongs to the HesA/MoeB/ThiF family. UBA4 subfamily. It depends on Zn(2+) as a cofactor.

The protein resides in the cytoplasm. It is found in the cytosol. It functions in the pathway tRNA modification; 5-methoxycarbonylmethyl-2-thiouridine-tRNA biosynthesis. Functionally, plays a central role in 2-thiolation of mcm(5)S(2)U at tRNA wobble positions of cytosolic tRNA(Lys), tRNA(Glu) and tRNA(Gln). Acts by mediating the C-terminal thiocarboxylation of sulfur carrier URM1. Its N-terminus first activates URM1 as acyl-adenylate (-COAMP), then the persulfide sulfur on the catalytic cysteine is transferred to URM1 to form thiocarboxylation (-COSH) of its C-terminus. The reaction probably involves hydrogen sulfide that is generated from the persulfide intermediate and that acts as a nucleophile towards URM1. Subsequently, a transient disulfide bond is formed. Does not use thiosulfate as sulfur donor; NFS1 probably acting as a sulfur donor for thiocarboxylation reactions. Prior mcm(5) tRNA modification by the elongator complex is required for 2-thiolation. May also be involved in protein urmylation. This chain is Adenylyltransferase and sulfurtransferase UBA4, found in Saccharomyces cerevisiae (strain RM11-1a) (Baker's yeast).